A 60-amino-acid chain; its full sequence is Large ribosomal subunit protein bL32 (60 aa).

The tract at residues 1–60 (MAVQQNKKSPSKRGMHRSHDFLVNPATAIEPNTGETHLRHHISPNGFYRGRKVLKTKADE) is disordered. Residues 49–60 (RGRKVLKTKADE) are compositionally biased toward basic residues.

Belongs to the bacterial ribosomal protein bL32 family.

This chain is Large ribosomal subunit protein bL32, found in Bordetella bronchiseptica (strain ATCC BAA-588 / NCTC 13252 / RB50) (Alcaligenes bronchisepticus).